Here is a 266-residue protein sequence, read N- to C-terminus: Esterase AGAP003155 (266 aa).

Active-site charge relay system residues include Ser114, Asp172, and His199. Residues 231-266 form a disordered region; that stretch reads ATEENSFHLEGQEEAEESALQPVHEGLQNGSDSDSD.

Belongs to the LovG family.

The polypeptide is Esterase AGAP003155 (Anopheles gambiae (African malaria mosquito)).